The sequence spans 491 residues: MANYFNTLNLRQQLAQLGKCRFMGRDEFADGASYLQGKKVVIVGCGAQGLNQGLNMRDSGLDISYALRKEAITEKRASWRKATENGFKVGTYEELIPQADLVVNLTPDKQHSDVVRSVQPLMKDGAALGYSHGFNIVEVGEQIRKDITVVMVAPKCPGTEVREEYKRGFGVPTLIAVHPENDPKGEGMAIAKAWVAATGGHRAGVLESSFVAEVKSDLMGEQTILCGMLQAGSLLCFDKLVAEGTDPAYAEKLIQFGWETITEALKQGGITLMMDRLSNPAKLRAYALSEQLKEIMAPLFQKHMDDIISGEFSSGMMADWANDDKKLLTWREETGKTAFETAPQFEGKIGEQEYFDKGVLMIAMVKAGVELAFETMVDSGIIEESAYYESLHELPLIANTIARKRLYEMNVVISDTAEYGNYLFSYACVPLLKPFMAELQPGDLGSAIPEGAVDNAQLRDVNDAIRSHAIEQVGKKLRGYMTDMKRIAVAG.

In terms of domain architecture, KARI N-terminal Rossmann spans 15–208; that stretch reads AQLGKCRFMG…GGHRAGVLES (194 aa). Residues 45 to 48, R68, R76, S78, and 108 to 110 each bind NADP(+); these read CGAQ and DKQ. H132 is a catalytic residue. G158 contributes to the NADP(+) binding site. KARI C-terminal knotted domains are found at residues 209–344 and 345–484; these read SFVA…TAPQ and FEGK…MTDM. Positions 217, 221, 389, and 393 each coordinate Mg(2+). S414 serves as a coordination point for substrate.

This sequence belongs to the ketol-acid reductoisomerase family. The cofactor is Mg(2+).

It catalyses the reaction (2R)-2,3-dihydroxy-3-methylbutanoate + NADP(+) = (2S)-2-acetolactate + NADPH + H(+). The catalysed reaction is (2R,3R)-2,3-dihydroxy-3-methylpentanoate + NADP(+) = (S)-2-ethyl-2-hydroxy-3-oxobutanoate + NADPH + H(+). It functions in the pathway amino-acid biosynthesis; L-isoleucine biosynthesis; L-isoleucine from 2-oxobutanoate: step 2/4. The protein operates within amino-acid biosynthesis; L-valine biosynthesis; L-valine from pyruvate: step 2/4. Its function is as follows. Involved in the biosynthesis of branched-chain amino acids (BCAA). Catalyzes an alkyl-migration followed by a ketol-acid reduction of (S)-2-acetolactate (S2AL) to yield (R)-2,3-dihydroxy-isovalerate. In the isomerase reaction, S2AL is rearranged via a Mg-dependent methyl migration to produce 3-hydroxy-3-methyl-2-ketobutyrate (HMKB). In the reductase reaction, this 2-ketoacid undergoes a metal-dependent reduction by NADPH to yield (R)-2,3-dihydroxy-isovalerate. The protein is Ketol-acid reductoisomerase (NADP(+)) of Salmonella schwarzengrund (strain CVM19633).